A 99-amino-acid polypeptide reads, in one-letter code: Protein NCBP2AS2 (99 aa).

Residues 76 to 99 form a disordered region; sequence ELRRGLRGRSGPPPGSQRGPGANI.

The polypeptide is Protein NCBP2AS2 (Homo sapiens (Human)).